A 639-amino-acid polypeptide reads, in one-letter code: 1-deoxy-D-xylulose-5-phosphate synthase (639 aa).

Residues His79 and 120–122 (AHS) contribute to the thiamine diphosphate site. Mg(2+) is bound at residue Asp151. Thiamine diphosphate is bound by residues 152 to 153 (GA), Asn180, Tyr289, and Glu371. Asn180 lines the Mg(2+) pocket.

It belongs to the transketolase family. DXPS subfamily. Homodimer. The cofactor is Mg(2+). Thiamine diphosphate is required as a cofactor.

It catalyses the reaction D-glyceraldehyde 3-phosphate + pyruvate + H(+) = 1-deoxy-D-xylulose 5-phosphate + CO2. It functions in the pathway metabolic intermediate biosynthesis; 1-deoxy-D-xylulose 5-phosphate biosynthesis; 1-deoxy-D-xylulose 5-phosphate from D-glyceraldehyde 3-phosphate and pyruvate: step 1/1. In terms of biological role, catalyzes the acyloin condensation reaction between C atoms 2 and 3 of pyruvate and glyceraldehyde 3-phosphate to yield 1-deoxy-D-xylulose-5-phosphate (DXP). This chain is 1-deoxy-D-xylulose-5-phosphate synthase, found in Rhizorhabdus wittichii (strain DSM 6014 / CCUG 31198 / JCM 15750 / NBRC 105917 / EY 4224 / RW1) (Sphingomonas wittichii).